A 65-amino-acid chain; its full sequence is Large ribosomal subunit protein bL35 (65 aa).

This sequence belongs to the bacterial ribosomal protein bL35 family.

The polypeptide is Large ribosomal subunit protein bL35 (Parabacteroides distasonis (strain ATCC 8503 / DSM 20701 / CIP 104284 / JCM 5825 / NCTC 11152)).